Here is a 367-residue protein sequence, read N- to C-terminus: Alcohol dehydrogenase 2 (367 aa).

Zn(2+)-binding residues include C48, H74, C107, C110, C113, C121, and C163. NAD(+) is bound by residues 187–193 (GAGGGLG), D212, K216, 286–288 (VGI), and R361.

This sequence belongs to the zinc-containing alcohol dehydrogenase family. As to quaternary structure, homotetramer. Zn(2+) is required as a cofactor.

The protein resides in the cytoplasm. The catalysed reaction is a primary alcohol + NAD(+) = an aldehyde + NADH + H(+). It carries out the reaction a secondary alcohol + NAD(+) = a ketone + NADH + H(+). The chain is Alcohol dehydrogenase 2 (alcB) from Emericella nidulans (strain FGSC A4 / ATCC 38163 / CBS 112.46 / NRRL 194 / M139) (Aspergillus nidulans).